We begin with the raw amino-acid sequence, 448 residues long: Methionine aminopeptidase 2 (448 aa).

Residues 1-94 (MAAQVTDALK…PRVLLSNLFP (94 aa)) form a disordered region. The segment covering 37 to 50 (AEAEDSDDDDEEPV) has biased composition (acidic residues). Residues 61–74 (KKKRKRKKKPKKKA) show a composition bias toward basic residues. His-201 is a substrate binding site. Asp-221, Asp-232, and His-301 together coordinate a divalent metal cation. Substrate is bound at residue His-309. A divalent metal cation-binding residues include Glu-334 and Glu-429.

The protein belongs to the peptidase M24A family. Methionine aminopeptidase eukaryotic type 2 subfamily. Requires Co(2+) as cofactor. Zn(2+) is required as a cofactor. Mn(2+) serves as cofactor. The cofactor is Fe(2+).

The protein resides in the cytoplasm. It catalyses the reaction Release of N-terminal amino acids, preferentially methionine, from peptides and arylamides.. Cotranslationally removes the N-terminal methionine from nascent proteins. The N-terminal methionine is often cleaved when the second residue in the primary sequence is small and uncharged (Met-Ala-, Cys, Gly, Pro, Ser, Thr, or Val). The sequence is that of Methionine aminopeptidase 2 from Botryotinia fuckeliana (strain B05.10) (Noble rot fungus).